Consider the following 482-residue polypeptide: Proline--tRNA ligase (482 aa).

Belongs to the class-II aminoacyl-tRNA synthetase family. ProS type 3 subfamily. Homodimer.

The protein resides in the cytoplasm. The catalysed reaction is tRNA(Pro) + L-proline + ATP = L-prolyl-tRNA(Pro) + AMP + diphosphate. Functionally, catalyzes the attachment of proline to tRNA(Pro) in a two-step reaction: proline is first activated by ATP to form Pro-AMP and then transferred to the acceptor end of tRNA(Pro). The chain is Proline--tRNA ligase from Mycoplasmopsis synoviae (strain 53) (Mycoplasma synoviae).